A 115-amino-acid chain; its full sequence is Insulin (115 aa).

A signal peptide spans 1–22 (MAALWLQSVSLLVLMLVSWSGS). Disulfide bonds link cysteine 32–cysteine 101, cysteine 44–cysteine 114, and cysteine 100–cysteine 105. Positions 56–92 (DVDPLLGFLPAKSGGAAAGGENEVAEFAFKDQMEMMV) are cleaved as a propeptide — c peptide.

It belongs to the insulin family. Heterodimer of a B chain and an A chain linked by two disulfide bonds.

The protein localises to the secreted. In terms of biological role, insulin decreases blood glucose concentration. It increases cell permeability to monosaccharides, amino acids and fatty acids. It accelerates glycolysis, the pentose phosphate cycle, and glycogen synthesis in liver. This is Insulin (ins) from Verasper moseri (Barfin flounder).